Consider the following 487-residue polypeptide: Fatty acid desaturase 2-like protein FADS2B (487 aa).

The span at M1–E11 shows a compositional bias: basic and acidic residues. The interval M1–C20 is disordered. Over M1 to R175 the chain is Cytoplasmic. Positions L62–S139 constitute a Cytochrome b5 heme-binding domain. 2 residues coordinate heme: H97 and H120. A helical membrane pass occupies residues F176–H196. Over H197 to S201 the chain is Lumenal. Residues W202–L222 form a helical membrane-spanning segment. Over Q223–H307 the chain is Cytoplasmic. The Histidine box-1 motif lies at H224–H228. The Histidine box-2 motif lies at H261 to H265. The helical transmembrane segment at L308–M328 threads the bilayer. Residues Q329–R349 are Lumenal-facing. The helical transmembrane segment at Y350–V370 threads the bilayer. Residues K371 to E487 lie on the Cytoplasmic side of the membrane. Positions Q426–H430 match the Histidine box-3 motif.

Belongs to the fatty acid desaturase type 1 family.

The protein resides in the endoplasmic reticulum membrane. The protein operates within lipid metabolism; polyunsaturated fatty acid biosynthesis. The chain is Fatty acid desaturase 2-like protein FADS2B from Mus musculus (Mouse).